We begin with the raw amino-acid sequence, 214 residues long: Holliday junction branch migration complex subunit RuvA (214 aa).

A domain I region spans residues 1-63; it reads MISFLRGPVA…EDSMTLYGFA (63 aa). The tract at residues 64–139 is domain II; it reads DPDEREVFEI…KLVPHGTVNG (76 aa). A flexible linker region spans residues 139–143; that stretch reads GAPAS. The domain III stretch occupies residues 144–214; the sequence is PSAQWKPQVV…SAGRQVTARG (71 aa).

Belongs to the RuvA family. Homotetramer. Forms an RuvA(8)-RuvB(12)-Holliday junction (HJ) complex. HJ DNA is sandwiched between 2 RuvA tetramers; dsDNA enters through RuvA and exits via RuvB. An RuvB hexamer assembles on each DNA strand where it exits the tetramer. Each RuvB hexamer is contacted by two RuvA subunits (via domain III) on 2 adjacent RuvB subunits; this complex drives branch migration. In the full resolvosome a probable DNA-RuvA(4)-RuvB(12)-RuvC(2) complex forms which resolves the HJ.

Its subcellular location is the cytoplasm. The RuvA-RuvB-RuvC complex processes Holliday junction (HJ) DNA during genetic recombination and DNA repair, while the RuvA-RuvB complex plays an important role in the rescue of blocked DNA replication forks via replication fork reversal (RFR). RuvA specifically binds to HJ cruciform DNA, conferring on it an open structure. The RuvB hexamer acts as an ATP-dependent pump, pulling dsDNA into and through the RuvAB complex. HJ branch migration allows RuvC to scan DNA until it finds its consensus sequence, where it cleaves and resolves the cruciform DNA. This is Holliday junction branch migration complex subunit RuvA from Renibacterium salmoninarum (strain ATCC 33209 / DSM 20767 / JCM 11484 / NBRC 15589 / NCIMB 2235).